The following is a 255-amino-acid chain: 5'-nucleotidase SurE (255 aa).

The a divalent metal cation site is built by D8, D9, S40, and N93.

It belongs to the SurE nucleotidase family. A divalent metal cation is required as a cofactor.

The protein localises to the cytoplasm. It catalyses the reaction a ribonucleoside 5'-phosphate + H2O = a ribonucleoside + phosphate. In terms of biological role, nucleotidase that shows phosphatase activity on nucleoside 5'-monophosphates. This Rhodopseudomonas palustris (strain BisB5) protein is 5'-nucleotidase SurE.